A 386-amino-acid polypeptide reads, in one-letter code: UDP-N-acetylbacillosamine transaminase (386 aa).

Substrate-binding positions include 25–28 (NYIA), alanine 56, and serine 179. Residue lysine 184 is modified to N6-(pyridoxal phosphate)lysine. Substrate contacts are provided by residues asparagine 227 and 325–328 (QIET).

The protein belongs to the DegT/DnrJ/EryC1 family. Pyridoxal 5'-phosphate is required as a cofactor.

The enzyme catalyses UDP-N-acetylbacillosamine + 2-oxoglutarate = UDP-2-acetamido-2,6-dideoxy-alpha-D-xylo-hex-4-ulose + L-glutamate. The protein operates within protein modification; protein glycosylation. Its function is as follows. Aminotransferase involved in the bacillosamine biosynthesis pathway by producing UDP-4-amino-4,6-dideoxy-alpha-D-GlcNAc (UDP-2-acetamido-4-amino-2,4,6-trideoxy-alpha-D-glucopyranose), a precursor used in the production of the glycan component 2,4-diacetamido-2,4,6-trideoxy-alpha-D-glucopyranose. Required for host colonization and virulence. Involved in the N-linked protein glycosylation pathway. The protein is UDP-N-acetylbacillosamine transaminase (pglE) of Campylobacter jejuni subsp. jejuni serotype O:2 (strain ATCC 700819 / NCTC 11168).